The following is a 609-amino-acid chain: Pogo transposable element with KRAB domain (609 aa).

Disordered regions lie at residues M1–D28 and E100–K127. A coiled-coil region spans residues L8 to D28. K13 participates in a covalent cross-link: Glycyl lysine isopeptide (Lys-Gly) (interchain with G-Cter in SUMO2). The KRAB domain maps to A47 to S118. A compositionally biased stretch (polar residues) spans S108 to A119. The region spanning A250–H323 is the HTH CENPB-type domain. Positions H353–F567 constitute a DDE-1 domain. K384 participates in a covalent cross-link: Glycyl lysine isopeptide (Lys-Gly) (interchain with G-Cter in SUMO2). The disordered stretch occupies residues S588–N609.

It localises to the nucleus. The chain is Pogo transposable element with KRAB domain (POGK) from Homo sapiens (Human).